The chain runs to 302 residues: Exodeoxyribonuclease (302 aa).

The enzyme catalyses Exonucleolytic cleavage in the 5'- to 3'-direction to yield nucleoside 5'-phosphates.. In terms of biological role, this enzyme is essential for phage DNA replication; it is believed to function in the removal of DNA-linked RNA primers. It is also necessary for host DNA degradation and phage genetic recombination. The polypeptide is Exodeoxyribonuclease (6) (Enterobacteria phage T3 (Bacteriophage T3)).